Here is a 295-residue protein sequence, read N- to C-terminus: Tissue factor (295 aa).

The N-terminal stretch at 1–28 (MAIPMRPRLLAALAPTFLGFLLLQVAVG) is a signal peptide. The Extracellular segment spans residues 29 to 252 (AGTPPGKAFN…TEQWKSVLGE (224 aa)). Residues Asn-38 and Asn-58 are each glycosylated (N-linked (GlcNAc...) asparagine). A disulfide bridge connects residues Cys-76 and Cys-84. 4 N-linked (GlcNAc...) asparagine glycosylation sites follow: Asn-95, Asn-109, Asn-170, and Asn-201. Cys-219 and Cys-242 are joined by a disulfide. Positions 246–248 (WKS) match the WKS motif motif. A helical membrane pass occupies residues 253 to 275 (TLIIVGAVVFLVTVFIILLTISL). Cys-276 carries S-palmitoyl cysteine lipidation. At 276–295 (CKRRKNRAGQKRKNTPSRLA) the chain is on the cytoplasmic side.

Belongs to the tissue factor family. Interacts with HSPE; the interaction, inhibited by heparin, promotes the generation of activated factor X and activates coagulation in the presence of activated factor VII.

The protein localises to the membrane. Functionally, initiates blood coagulation by forming a complex with circulating factor VII or VIIa. The [TF:VIIa] complex activates factors IX or X by specific limited proteolysis. TF plays a role in normal hemostasis by initiating the cell-surface assembly and propagation of the coagulation protease cascade. In Rattus norvegicus (Rat), this protein is Tissue factor (F3).